Here is a 115-residue protein sequence, read N- to C-terminus: U3-lycotoxin-Ls1k (115 aa).

Residues 1-20 (MKFVLLFGVLLVTLFSYSSA) form the signal peptide. The propeptide occupies 21 to 44 (EMFDDFDQADEDELLSLIEKEEAR). 4 cysteine pairs are disulfide-bonded: Cys48–Cys63, Cys55–Cys72, Cys62–Cys87, and Cys74–Cys85.

The protein belongs to the neurotoxin 19 (CSTX) family. 01 subfamily. In terms of tissue distribution, expressed by the venom gland.

Its subcellular location is the secreted. The polypeptide is U3-lycotoxin-Ls1k (Lycosa singoriensis (Wolf spider)).